Here is a 525-residue protein sequence, read N- to C-terminus: Retinoblastoma-binding-like protein E (525 aa).

5 WD repeats span residues 25–66 (PKNI…IVRT), 69–108 (HHTG…ILYS), 222–261 (SSNT…LYQQ), 267–312 (DSVN…KDLE), and 313–352 (GPKE…NWSS). Disordered stretches follow at residues 371–398 (DEFD…RNPY) and 462–525 (EKYQ…KKRK). Positions 383–392 (QEVNNNNNNN) are enriched in low complexity. Positions 462–471 (EKYQKDKEDS) are enriched in basic and acidic residues. The segment covering 472–500 (SSTTSNSTISSSSSPSPSSSSTTTTTTTS) has biased composition (low complexity). Residues 501–525 (QKKDETQKKEKSTKKERNSDSKKRK) show a composition bias toward basic and acidic residues.

The protein localises to the nucleus. Its function is as follows. Involved in mono-, di- and trimethylation at 'Lys-4' of histone H3. Histone H3 'Lys-4' methylation represents a specific tag for epigenetic transcriptional activation. This is Retinoblastoma-binding-like protein E from Dictyostelium discoideum (Social amoeba).